The sequence spans 458 residues: Zinc finger protein 239 (458 aa).

Lysine 108 participates in a covalent cross-link: Glycyl lysine isopeptide (Lys-Gly) (interchain with G-Cter in SUMO2). The residue at position 191 (serine 191) is a Phosphoserine. 9 consecutive C2H2-type zinc fingers follow at residues tyrosine 207–histidine 229, tyrosine 235–histidine 257, tyrosine 263–histidine 285, tyrosine 291–histidine 313, tyrosine 319–histidine 341, tyrosine 347–histidine 369, tyrosine 375–histidine 397, tyrosine 403–histidine 425, and tyrosine 431–histidine 453.

Belongs to the krueppel C2H2-type zinc-finger protein family.

The protein resides in the nucleus. May be involved in transcriptional regulation. The sequence is that of Zinc finger protein 239 (ZNF239) from Pongo abelii (Sumatran orangutan).